A 311-amino-acid polypeptide reads, in one-letter code: Class E basic helix-loop-helix protein 22 (311 aa).

Positions 22–170 (AKRMESAFRS…GGSKKSKEQK (149 aa)) are disordered. Low complexity predominate over residues 81–96 (GESASRSSVAESSGGE). Positions 125-147 (AGGGGGGGGGGGGGPGGGGGGGL) are enriched in gly residues. The bHLH domain occupies 171–225 (ALRLNINARERRRMHDLNDALDELRAVIPYAHSPSVRKLSKIATLLLAKNYILMQ).

It localises to the nucleus. May act as a transcriptional repressor. The protein is Class E basic helix-loop-helix protein 22 (BHLHE22) of Gallus gallus (Chicken).